The following is a 360-amino-acid chain: Olfactory receptor 1L1 (360 aa).

Residues 1-75 (MERNHNPDNC…GLSSRPEDQK (75 aa)) are Extracellular-facing. N-linked (GlcNAc...) asparagine glycosylation is present at asparagine 55. The chain crosses the membrane as a helical span at residues 76-99 (PLFAVFLPIYLITVIGNLLIILAI). At 100 to 107 (RSDTRLQT) the chain is on the cytoplasmic side. The helical transmembrane segment at 108–129 (PMYFFLSILSFVDICYVTVIIP) threads the bilayer. At 130 to 150 (KMLVNFLSETKTISYSECLTQ) the chain is on the extracellular side. Cysteine 147 and cysteine 239 are oxidised to a cystine. Residues 151 to 170 (MYFFLAFGNTDSYLLAAMAI) form a helical membrane-spanning segment. Residues 171–189 (DRYVAICNPFHYITIMSHR) lie on the Cytoplasmic side of the membrane. The chain crosses the membrane as a helical span at residues 190 to 208 (CCVLLLVLSFCIPHFHSLL). The Extracellular segment spans residues 209–246 (HILLTNQLIFCASNVIHHFFCDDQPVLKLSCSSHFVKE). The chain crosses the membrane as a helical span at residues 247–269 (ITVMTEGLAVIMTPFSCIIISYL). The Cytoplasmic portion of the chain corresponds to 270–286 (RILITVLKIPSAAGKRK). The chain crosses the membrane as a helical span at residues 287 to 309 (AFSTCGSHLTVVTLFYGSISYLY). Residues 310–321 (FQPLSNYTVKDQ) lie on the Extracellular side of the membrane. Asparagine 315 is a glycosylation site (N-linked (GlcNAc...) asparagine). A helical transmembrane segment spans residues 322 to 341 (IATIIYTVLTPMLNPFIYSL). The Cytoplasmic segment spans residues 342-360 (RNKDMKQGLAKLMHRMKCQ).

This sequence belongs to the G-protein coupled receptor 1 family.

The protein resides in the cell membrane. Odorant receptor. The chain is Olfactory receptor 1L1 (OR1L1) from Homo sapiens (Human).